The chain runs to 514 residues: Putative fucosyltransferase 10 (514 aa).

5 N-linked (GlcNAc...) asparagine glycosylation sites follow: asparagine 185, asparagine 210, asparagine 355, asparagine 377, and asparagine 456.

Belongs to the glycosyltransferase 37 family. Expressed in root, leaves, stems and seedlings.

The protein resides in the golgi apparatus. It functions in the pathway protein modification; protein glycosylation. May be involved in cell wall biosynthesis. May act as a fucosyltransferase. The protein is Putative fucosyltransferase 10 (FUT10) of Arabidopsis thaliana (Mouse-ear cress).